Consider the following 170-residue polypeptide: Probable chorismate pyruvate-lyase (170 aa).

Substrate-binding residues include Arg-77, Leu-114, and Glu-157.

It belongs to the UbiC family.

Its subcellular location is the cytoplasm. The catalysed reaction is chorismate = 4-hydroxybenzoate + pyruvate. Its pathway is cofactor biosynthesis; ubiquinone biosynthesis. Removes the pyruvyl group from chorismate, with concomitant aromatization of the ring, to provide 4-hydroxybenzoate (4HB) for the ubiquinone pathway. This chain is Probable chorismate pyruvate-lyase, found in Pasteurella multocida (strain Pm70).